The following is a 111-amino-acid chain: Cyclin-dependent protein kinase inhibitor SMR2 (111 aa).

The interval 1–66 (MSKLLETLEE…PPPRKRPREI (66 aa)) is disordered. Positions 10–35 (EEKTVEQKPRSQEEEDHQDSSKKEEL) are enriched in basic and acidic residues.

Interacts with CYCD2-1. Interacts with CDKB1-1. In terms of tissue distribution, expressed at low levels in roots and stems. Expressed in the root vascular tissue.

The protein localises to the nucleus. Its function is as follows. Cyclin-dependent protein kinase (CDK) inhibitor that restricts cell proliferation and cooperates with SIM and SMR1 to promote endoreplication during leaf development. This is Cyclin-dependent protein kinase inhibitor SMR2 from Arabidopsis thaliana (Mouse-ear cress).